The sequence spans 326 residues: Light-induced protein, chloroplastic (326 aa).

The N-terminal 63 residues, 1–63, are a transit peptide targeting the chloroplast; that stretch reads MASISSLNQI…TNPKPKFTAQ (63 aa).

The protein belongs to the LIPC family. Associates with the major light-harvesting antenna complex polypeptides of the PSII oxygen-evolving complex. As to expression, expressed at high levels in leaves and in the petals and anthers of flowers.

Its subcellular location is the plastid. The protein localises to the chloroplast thylakoid membrane. Functionally, required for normal plant growth. May be both photoprotective and play an ancillary role in photosynthesis. May structurally stabilize thylakoids during osmotic and oxidative stress. The protein is Light-induced protein, chloroplastic of Solanum demissum (Wild potato).